The following is a 221-amino-acid chain: Germin-like protein 5-1 (221 aa).

The signal sequence occupies residues 1–25; sequence MARPSLPCAVVAVLLLALLPTPSTA. A disulfide bridge connects residues Cys-35 and Cys-50. The Cupin type-1 domain maps to 62-210; the sequence is KGLAAAGNTN…AFQVGTKEVE (149 aa). An N-linked (GlcNAc...) asparagine glycan is attached at Asn-71. His-110, His-112, Glu-117, and His-156 together coordinate Mn(2+).

It belongs to the germin family. As to quaternary structure, oligomer (believed to be a pentamer but probably hexamer).

It localises to the secreted. The protein resides in the extracellular space. The protein localises to the apoplast. Functionally, may play a role in plant defense. Probably has no oxalate oxidase activity even if the active site is conserved. This chain is Germin-like protein 5-1, found in Oryza sativa subsp. japonica (Rice).